The following is a 50-amino-acid chain: Photosystem II reaction center protein K (50 aa).

Residues 1–13 (MLNLNFTNITVMG) constitute a propeptide that is removed on maturation. Residues 25–45 (IVDILPIIPILFFLLAFVWQA) traverse the membrane as a helical segment.

This sequence belongs to the PsbK family. In terms of assembly, PSII is composed of 1 copy each of membrane proteins PsbA, PsbB, PsbC, PsbD, PsbE, PsbF, PsbH, PsbI, PsbJ, PsbK, PsbL, PsbM, PsbT, PsbY, PsbZ, Psb30/Ycf12, at least 3 peripheral proteins of the oxygen-evolving complex and a large number of cofactors. It forms dimeric complexes.

It is found in the plastid. The protein resides in the chloroplast thylakoid membrane. Functionally, one of the components of the core complex of photosystem II (PSII). PSII is a light-driven water:plastoquinone oxidoreductase that uses light energy to abstract electrons from H(2)O, generating O(2) and a proton gradient subsequently used for ATP formation. It consists of a core antenna complex that captures photons, and an electron transfer chain that converts photonic excitation into a charge separation. The protein is Photosystem II reaction center protein K of Euglena myxocylindracea.